The primary structure comprises 466 residues: Ribulose bisphosphate carboxylase large chain (466 aa).

K5 is subject to N6,N6,N6-trimethyllysine. Residues N114 and T164 each contribute to the substrate site. The Proton acceptor role is filled by K166. Residue K168 coordinates substrate. K192, D194, and E195 together coordinate Mg(2+). At K192 the chain carries N6-carboxylysine. H285 (proton acceptor) is an active-site residue. Substrate is bound by residues R286, H318, and S370.

The protein belongs to the RuBisCO large chain family. Type I subfamily. Heterohexadecamer of 8 large chains and 8 small chains; disulfide-linked. The disulfide link is formed within the large subunit homodimers. Mg(2+) is required as a cofactor. In terms of processing, the disulfide bond which can form in the large chain dimeric partners within the hexadecamer appears to be associated with oxidative stress and protein turnover.

It is found in the plastid. It localises to the chloroplast. It catalyses the reaction 2 (2R)-3-phosphoglycerate + 2 H(+) = D-ribulose 1,5-bisphosphate + CO2 + H2O. The catalysed reaction is D-ribulose 1,5-bisphosphate + O2 = 2-phosphoglycolate + (2R)-3-phosphoglycerate + 2 H(+). In terms of biological role, ruBisCO catalyzes two reactions: the carboxylation of D-ribulose 1,5-bisphosphate, the primary event in carbon dioxide fixation, as well as the oxidative fragmentation of the pentose substrate in the photorespiration process. Both reactions occur simultaneously and in competition at the same active site. The polypeptide is Ribulose bisphosphate carboxylase large chain (Drosera peltata (Pale sundew)).